Reading from the N-terminus, the 128-residue chain is L-ectoine synthase (128 aa).

Belongs to the ectoine synthase family.

The enzyme catalyses (2S)-4-acetamido-2-aminobutanoate = L-ectoine + H2O. Its pathway is amine and polyamine biosynthesis; ectoine biosynthesis; L-ectoine from L-aspartate 4-semialdehyde: step 3/3. Catalyzes the circularization of gamma-N-acetyl-alpha,gamma-diaminobutyric acid (ADABA) to ectoine (1,4,5,6-tetrahydro-2-methyl-4-pyrimidine carboxylic acid), which is an excellent osmoprotectant. This is L-ectoine synthase from Oceanobacillus iheyensis (strain DSM 14371 / CIP 107618 / JCM 11309 / KCTC 3954 / HTE831).